The chain runs to 314 residues: MRFKGLDLNLLVALDALMTERNLTAAARQINLSQPAMSAAIARLRSYFRDELFTMRGRELVPTPGAEALAGPVREALLHIQLSIISRDAFDPTLSSRRFRVILSDFMTIVFFRRIVDRIAQEAPAVRFELLPFSDEPGELLRRGEVDFLILPELFMSSAHPKATLFDETLVCVGCRTNKQLLRPLTFEKYNSMGHVTAKFGRALRPNLEEWFLLEHGLKRRIEVVVQGFSLIPPILFDTGRIGTMPLRLARHFEKWMPLRIVEPPLPLPTFTEAVQWPAFHNTDPASIWMRRILLEEASNMGSADRKLPTRRRC.

Residues 6-63 (LDLNLLVALDALMTERNLTAAARQINLSQPAMSAAIARLRSYFRDELFTMRGRELVPT) form the HTH lysR-type domain. The H-T-H motif DNA-binding region spans 23–42 (LTAAARQINLSQPAMSAAIA).

Belongs to the LysR transcriptional regulatory family.

NodD regulates the expression of the nodABCFE genes which encode other nodulation proteins. NodD is also a negative regulator of its own expression. Binds flavonoids as inducers. The sequence is that of Nodulation protein D 1 (nodD1) from Bradyrhizobium elkanii.